Here is a 355-residue protein sequence, read N- to C-terminus: S-adenosylmethionine:tRNA ribosyltransferase-isomerase (355 aa).

Belongs to the QueA family. As to quaternary structure, monomer.

The protein localises to the cytoplasm. It catalyses the reaction 7-aminomethyl-7-carbaguanosine(34) in tRNA + S-adenosyl-L-methionine = epoxyqueuosine(34) in tRNA + adenine + L-methionine + 2 H(+). Its pathway is tRNA modification; tRNA-queuosine biosynthesis. Its function is as follows. Transfers and isomerizes the ribose moiety from AdoMet to the 7-aminomethyl group of 7-deazaguanine (preQ1-tRNA) to give epoxyqueuosine (oQ-tRNA). This is S-adenosylmethionine:tRNA ribosyltransferase-isomerase from Erwinia tasmaniensis (strain DSM 17950 / CFBP 7177 / CIP 109463 / NCPPB 4357 / Et1/99).